A 337-amino-acid chain; its full sequence is B1 bradykinin receptor (337 aa).

At 1-41 (MASEVLLELQPSNRSLQAPANITSCESALEDWDLLYRVLPG) the chain is on the extracellular side. N-linked (GlcNAc...) asparagine glycosylation is found at asparagine 13 and asparagine 21. A helical membrane pass occupies residues 42–62 (FVITICFFGLLGNLLVLSFFL). Over 63 to 83 (LPWRQWWWQQRQRQQRLTIAE) the chain is Cytoplasmic. Residues 84–104 (IYLANLAASDLVFVLGLPFWA) traverse the membrane as a helical segment. Over 105-121 (ENIGNRFNWPFGTDLCR) the chain is Extracellular. Cysteine 120 and cysteine 199 are joined by a disulfide. The helical transmembrane segment at 122-142 (VVSGVIKANLFVSIFLVVAIS) threads the bilayer. Topologically, residues 143 to 164 (QDRYRLLVYPMTSWGYRRRRQA) are cytoplasmic. A helical membrane pass occupies residues 165-185 (QATCLLIWVAGGLLSIPTFLL). Residues 186-217 (RSVKVVPDLNVSACILLFPHEAWHFARMVELN) are Extracellular-facing. An N-linked (GlcNAc...) asparagine glycan is attached at asparagine 195. Residues 218 to 238 (VLGFLLPVTAIIFFNYHILAS) form a helical membrane-spanning segment. The Cytoplasmic segment spans residues 239-261 (LRGQKEASRTRCGGPKGSKTTGL). A helical membrane pass occupies residues 262–282 (ILTLVASFLVCWCPYHFFAFL). Residues 283–305 (DFLVQVRVIQDCSWKEITDLGLQ) are Extracellular-facing. The chain crosses the membrane as a helical span at residues 306–326 (LANFFAFVNSCLNPLIYVFAG). Residues 327–337 (RLLKTRVLGTL) lie on the Cytoplasmic side of the membrane.

This sequence belongs to the G-protein coupled receptor 1 family. Bradykinin receptor subfamily. BDKRB1 sub-subfamily. In terms of tissue distribution, expressed in bladder, lung, duodenum, kidney, uterus, thymus, salivary gland, testis, prostate, macrophages, aorta, spleen and heart.

It localises to the cell membrane. Its function is as follows. This is a receptor for bradykinin. Could be a factor in chronic pain and inflammation. The chain is B1 bradykinin receptor (Bdkrb1) from Rattus norvegicus (Rat).